The primary structure comprises 101 residues: Small integral membrane protein 14 (101 aa).

The span at 71–81 (SDRRTADDAAI) shows a compositional bias: basic and acidic residues. The tract at residues 71–101 (SDRRTADDAAIEKPTGSSDDNTPPPPPPSAM) is disordered. Residues 92-101 (TPPPPPPSAM) show a composition bias toward pro residues.

The polypeptide is Small integral membrane protein 14 (Caenorhabditis elegans).